The sequence spans 501 residues: Neuronal acetylcholine receptor subunit beta-2 (501 aa).

Positions 1–25 (MARCSNSMALLFSFGLLWLCSGVLG) are cleaved as a signal peptide. Over 26–238 (TDTEERLVEH…IIRRKPLFYT (213 aa)) the chain is Extracellular. Residues Asn-51 and Asn-168 are each glycosylated (N-linked (GlcNAc...) asparagine). An intrachain disulfide couples Cys-155 to Cys-169. Residues 239–259 (INLIIPCVLITSLAILVFYLP) form a helical membrane-spanning segment. Residues 260-267 (SDCGEKMT) lie on the Cytoplasmic side of the membrane. A helical transmembrane segment spans residues 268-288 (LCISVLLALTVFLLLISKIVP). The Extracellular segment spans residues 289 to 300 (PTSLDVPLVGKY). The helical transmembrane segment at 301–321 (LMFTMVLVTFSIVTSVCVLNV) threads the bilayer. At 322 to 459 (HHRSPTTHTM…WKYVAMVIDR (138 aa)) the chain is on the cytoplasmic side. A helical transmembrane segment spans residues 460–480 (LFLWIFVFVCVFGTIGMFLQP).

Belongs to the ligand-gated ion channel (TC 1.A.9) family. Acetylcholine receptor (TC 1.A.9.1) subfamily. Beta-2/CHRNB2 sub-subfamily. As to quaternary structure, neuronal AChR is a heteropentamer composed of two different types of subunits: alpha and beta. CHRNB2/Beta-2 subunit can be combined to CHRNA2/alpha-2, CHRNA3/alpha-3 or CHRNA4/alpha-4, CHRNA5/alpha-5, CHRNA6/alpha-6 and CHRNB3/beta-3 to give rise to functional receptors. CHRNA2:CHRNB2 and CHRNA4:CHRNB2 nAChR complexes exist in two subtypes: LS (low agonist sensitivity) with a (CHRNA2/4)3:(CHRNB2)2 and HS (high agonist sensitivity) with a (CHRNA2/4)2:(CHRNB2)3 stoichiometry; the subtypes differ in their subunit binding interfaces which are involved in ligand binding. Cells produce predominantly an (CHRNA4)3:(CHRNB2)2 nAChR. The stoichiometric form (CHRNA4)2:(CHRNB2)3 expression is selectively up-regulated by nicotine and has lower single channel conductance and calcium permeability. Also part of the stoichiometric forms: (CHRNA4:CHRNB2)2:CHRNB3 or (CHRNA6:CHRNB2)2:CHRNB3. Can form heteropentamers with CHRNA7, mainly found in basal forebrain cholinergic neurons. Interacts with RIC3; which is required for proper folding and assembly. Interacts with LYPD6.

The protein resides in the synaptic cell membrane. The protein localises to the cell membrane. It catalyses the reaction K(+)(in) = K(+)(out). The enzyme catalyses Na(+)(in) = Na(+)(out). It carries out the reaction Ca(2+)(in) = Ca(2+)(out). Its activity is regulated as follows. Activated by a myriad of ligands such as acetylcholine, cytisine, nicotine, choline and epibatidine. Channel potentiation by calcium is stoichiometry-selective, CHRNA4:CHRNB2 nACh receptor is achieved by calcium association with topographically distinct sites framed by anionic residues within the CHRNA4 subunit and between the CHRNA4 and CHRNB2 subunits. Oligomeric amyloid-beta protein 42 activates specifially CHRNA7:CHRNB2 nAchRs. nAChR activity is inhibited by the antagonist alpha-conotoxins BuIA, PnIA, PnIC, GID and MII, small disulfide-constrained peptides from cone snails. Functionally, component of neuronal acetylcholine receptors (nAChRs) that function as pentameric, ligand-gated cation channels with high calcium permeability among other activities. nAChRs are excitatory neurotrasnmitter receptors formed by a collection of nAChR subunits known to mediate synaptic transmission in the nervous system and the neuromuscular junction. Each nAchR subunit confers differential attributes to channel properties, including activation, deactivation and desensitization kinetics, pH sensitivity, cation permeability, and binding to allosteric modulators. CHRNB2 forms heteropentameric neuronal acetylcholine receptors with CHRNA2, CHRNA3, CHRNA4 and CHRNA6, as well as CHRNA5 and CHRNB3 as accesory subunits. Found in two major stoichiometric forms,(CHRNA4)3:(CHRNB2)2 and (CHRNA4)2:(CHRNB2)3, the two stoichiometric forms differ in their unitary conductance, calcium permeability, ACh sensitivity and potentiation by divalent cation. Heteropentameric channels with CHRNA6 and CHRNA4 exhibit high sensitivity to ACh and nicotine and are predominantly expressed in only a few brain areas, including dopaminergic neurons, norepirephrine neurons and cells of the visual system. nAChrs containing CHRNA6 subunits mediate endogenous cholinergic modulation of dopamine and gamma-aminobutyric acid (GABA) release in response to nicotine at nerve terminals. Also forms functional nAChRs with other subunits such as CHRNA7:CHRNB2, mainly expressed in basal forebrain cholinergic neurons. The sequence is that of Neuronal acetylcholine receptor subunit beta-2 (Chrnb2) from Mus musculus (Mouse).